We begin with the raw amino-acid sequence, 477 residues long: Dihydrolipoyl dehydrogenase 3 (477 aa).

Residues Glu-39–Cys-47, Lys-56, and Ala-118 each bind FAD. Residues Cys-47 and Cys-52 are joined by a disulfide bond. Residues Gly-186–Ile-190, Glu-209, and Ala-279–Arg-282 each bind NAD(+). Asp-322 and Ala-330 together coordinate FAD. Catalysis depends on His-454, which acts as the Proton acceptor.

Belongs to the class-I pyridine nucleotide-disulfide oxidoreductase family. Homodimer. Requires FAD as cofactor.

The protein resides in the cytoplasm. The catalysed reaction is N(6)-[(R)-dihydrolipoyl]-L-lysyl-[protein] + NAD(+) = N(6)-[(R)-lipoyl]-L-lysyl-[protein] + NADH + H(+). The sequence is that of Dihydrolipoyl dehydrogenase 3 (lpdA3) from Haloarcula marismortui (strain ATCC 43049 / DSM 3752 / JCM 8966 / VKM B-1809) (Halobacterium marismortui).